A 226-amino-acid polypeptide reads, in one-letter code: Ribose-5-phosphate isomerase A (226 aa).

Residues 33–36 (TGST), 86–89 (DGAD), and 99–102 (KGGG) contribute to the substrate site. The Proton acceptor role is filled by Glu-108. Lys-126 serves as a coordination point for substrate.

This sequence belongs to the ribose 5-phosphate isomerase family. Homodimer.

It carries out the reaction aldehydo-D-ribose 5-phosphate = D-ribulose 5-phosphate. The protein operates within carbohydrate degradation; pentose phosphate pathway; D-ribose 5-phosphate from D-ribulose 5-phosphate (non-oxidative stage): step 1/1. Its function is as follows. Catalyzes the reversible conversion of ribose-5-phosphate to ribulose 5-phosphate. The sequence is that of Ribose-5-phosphate isomerase A from Bordetella bronchiseptica (strain ATCC BAA-588 / NCTC 13252 / RB50) (Alcaligenes bronchisepticus).